Reading from the N-terminus, the 457-residue chain is Multidrug resistance protein MdtK (457 aa).

A run of 12 helical transmembrane segments spans residues 11 to 31 (LLALAIPVILAQIAQTAMGFV), 53 to 73 (IWLPAILFGHGLLLALTPVIA), 93 to 113 (WLAGFVSVLIMLVLWNAGYII), 127 to 147 (AVGYLRALLWGAPGYLFFQVA), 160 to 180 (GMVMGFIGLLVNIPVNYIFIY), 189 to 209 (GGVGCGVATAAVYWVMFLAMV), 243 to 263 (LPIALALFFEVTLFAVVALLV), 276 to 296 (IALNFSSLMFVLPMSLAAAVT), 314 to 334 (AARTGLMVGVCMATLTAIFTV), 350 to 370 (VVTLAAHLMLLAAVYQISDSI), 387 to 407 (IFYITFTAYWVLGLPSGYILA), and 418 to 438 (PAGFWIGFIIGLTSAAIMMML).

The protein belongs to the multi antimicrobial extrusion (MATE) (TC 2.A.66.1) family. MdtK subfamily.

It is found in the cell inner membrane. In terms of biological role, multidrug efflux pump that functions probably as a Na(+)/drug antiporter. The protein is Multidrug resistance protein MdtK of Escherichia coli O9:H4 (strain HS).